The primary structure comprises 824 residues: Acyl-homoserine lactone acylase QuiP (824 aa).

An N-terminal signal peptide occupies residues 1–26 (MASPALRHFLPRFGAAAAAASFLSLA). Serine 264 serves as the catalytic Nucleophile.

It belongs to the peptidase S45 family. In terms of assembly, heterodimer of an alpha subunit and a beta subunit processed from the same precursor.

The protein resides in the periplasm. The enzyme catalyses an N-acyl-L-homoserine lactone + H2O = L-homoserine lactone + a carboxylate. In terms of biological role, catalyzes the deacylation of acyl-homoserine lactone (AHL or acyl-HSL), releasing homoserine lactone (HSL) and the corresponding fatty acid. Possesses a specificity for the degradation of long-chain acyl-HSLs (side chains of seven or more carbons in length). This is Acyl-homoserine lactone acylase QuiP (quiP) from Pseudomonas syringae pv. tomato (strain ATCC BAA-871 / DC3000).